Consider the following 65-residue polypeptide: Light-harvesting protein B800/830/1020 beta-2 chain (65 aa).

At 1 to 17 the chain is on the cytoplasmic side; sequence TDIRTGLTDEECQEIHE. A bacteriochlorophyll-binding residues include His16 and Asn34. A helical transmembrane segment spans residues 18-40; that stretch reads MNMLGMHAYWSIGLIANALAYAW. Residues 41 to 65 lie on the Periplasmic side of the membrane; sequence RPFHQGRAGNRLEDHAPDYVRSALT.

Belongs to the antenna complex beta subunit family. In terms of assembly, the core complex is formed by different alpha and beta chains, binding bacteriochlorophyll molecules, and arranged most probably in tetrameric structures disposed around the reaction center. The non-pigmented gamma chains may constitute additional components.

The protein resides in the cell inner membrane. Antenna complexes are light-harvesting systems, which transfer the excitation energy to the reaction centers. In Halorhodospira halochloris (Ectothiorhodospira halochloris), this protein is Light-harvesting protein B800/830/1020 beta-2 chain.